The primary structure comprises 449 residues: Glutamyl-tRNA reductase (449 aa).

Residues T58–R61, S121, E126–Q128, and Q132 contribute to the substrate site. The active-site Nucleophile is the C59. An NADP(+)-binding site is contributed by G203–A208.

It belongs to the glutamyl-tRNA reductase family. As to quaternary structure, homodimer.

The catalysed reaction is (S)-4-amino-5-oxopentanoate + tRNA(Glu) + NADP(+) = L-glutamyl-tRNA(Glu) + NADPH + H(+). The protein operates within porphyrin-containing compound metabolism; protoporphyrin-IX biosynthesis; 5-aminolevulinate from L-glutamyl-tRNA(Glu): step 1/2. Catalyzes the NADPH-dependent reduction of glutamyl-tRNA(Glu) to glutamate 1-semialdehyde (GSA). The chain is Glutamyl-tRNA reductase from Helicobacter pylori (strain J99 / ATCC 700824) (Campylobacter pylori J99).